We begin with the raw amino-acid sequence, 511 residues long: GMP synthase [glutamine-hydrolyzing] (511 aa).

In terms of domain architecture, Glutamine amidotransferase type-1 spans 6 to 196 (LVLVLDFGSQ…VFDVCGCTGD (191 aa)). Catalysis depends on Cys-83, which acts as the Nucleophile. Active-site residues include His-170 and Glu-172. One can recognise a GMPS ATP-PPase domain in the interval 197-386 (WSIENFIDME…LGVPDRIVWR (190 aa)). 224–230 (SGGVDSS) provides a ligand contact to ATP.

In terms of assembly, homodimer.

It carries out the reaction XMP + L-glutamine + ATP + H2O = GMP + L-glutamate + AMP + diphosphate + 2 H(+). The protein operates within purine metabolism; GMP biosynthesis; GMP from XMP (L-Gln route): step 1/1. In terms of biological role, catalyzes the synthesis of GMP from XMP. The sequence is that of GMP synthase [glutamine-hydrolyzing] from Oceanobacillus iheyensis (strain DSM 14371 / CIP 107618 / JCM 11309 / KCTC 3954 / HTE831).